The primary structure comprises 239 residues: Ribosomal RNA large subunit methyltransferase E (239 aa).

The S-adenosyl-L-methionine site is built by glycine 81, tryptophan 83, aspartate 104, aspartate 120, and aspartate 144. Lysine 184 acts as the Proton acceptor in catalysis.

It belongs to the class I-like SAM-binding methyltransferase superfamily. RNA methyltransferase RlmE family.

Its subcellular location is the cytoplasm. The catalysed reaction is uridine(2552) in 23S rRNA + S-adenosyl-L-methionine = 2'-O-methyluridine(2552) in 23S rRNA + S-adenosyl-L-homocysteine + H(+). In terms of biological role, specifically methylates the uridine in position 2552 of 23S rRNA at the 2'-O position of the ribose in the fully assembled 50S ribosomal subunit. The polypeptide is Ribosomal RNA large subunit methyltransferase E (Rhizobium rhizogenes (strain K84 / ATCC BAA-868) (Agrobacterium radiobacter)).